A 549-amino-acid polypeptide reads, in one-letter code: 4-hydroxybutyrate--CoA ligase 2 (549 aa).

Residues Thr-195–Lys-203, Glu-336–His-341, Asp-425, and Arg-440 contribute to the ATP site. Residues Gly-448–Glu-450, Lys-506, and Cys-514–Lys-516 contribute to the CoA site. Lys-530 serves as a coordination point for ATP.

The protein belongs to the ATP-dependent AMP-binding enzyme family. Requires Mg(2+) as cofactor. It depends on Mn(2+) as a cofactor.

The enzyme catalyses 4-hydroxybutanoate + ATP + CoA = 4-hydroxybutanoyl-CoA + AMP + diphosphate. The catalysed reaction is acetate + ATP + CoA = acetyl-CoA + AMP + diphosphate. It catalyses the reaction propanoate + ATP + CoA = propanoyl-CoA + AMP + diphosphate. It carries out the reaction a medium-chain fatty acid + ATP + CoA = a medium-chain fatty acyl-CoA + AMP + diphosphate. Catalyzes the ligation of coenzyme A (CoA) to 4-hydroxybutyrate (4HB). It can also use butyrate, valerate, propionate, acetate and 3-hydroxybutyrate (3HB) as substrates. In Metallosphaera sedula (strain ATCC 51363 / DSM 5348 / JCM 9185 / NBRC 15509 / TH2), this protein is 4-hydroxybutyrate--CoA ligase 2.